Consider the following 306-residue polypeptide: Agmatinase (306 aa).

Positions 126, 149, 151, 153, 230, and 232 each coordinate Mn(2+).

Belongs to the arginase family. Agmatinase subfamily. The cofactor is Mn(2+).

The enzyme catalyses agmatine + H2O = urea + putrescine. The protein operates within amine and polyamine biosynthesis; putrescine biosynthesis via agmatine pathway; putrescine from agmatine: step 1/1. In terms of biological role, catalyzes the formation of putrescine from agmatine. This is Agmatinase from Cronobacter sakazakii (strain ATCC BAA-894) (Enterobacter sakazakii).